A 545-amino-acid polypeptide reads, in one-letter code: Tetrahydrocannabinolic acid synthase (545 aa).

The N-terminal stretch at 1–28 (MNCSAFSFWFVCKIIFFFLSFHIQISIA) is a signal peptide. Cys-37 and Cys-99 form a disulfide bridge. N-linked (GlcNAc...) asparagine glycans are attached at residues Asn-65 and Asn-89. An FAD-binding PCMH-type domain is found at 77-251 (TTPKPLVIVT…AAWKIKLVAV (175 aa)). Residues 109–115 (TRSGGHD) and Ser-120 each bind FAD. A cross-link (6-(S-cysteinyl)-8alpha-(pros-histidyl)-FAD (His-Cys)) is located at residues 114-176 (HDAEGMSYIS…ENLSFPGGYC (63 aa)). Asn-168 is a glycosylation site (N-linked (GlcNAc...) asparagine). FAD is bound by residues Cys-176, 180 to 184 (GVGGH), Tyr-190, Glu-236, and Ile-241. Residue His-292 coordinates cannabigerolate. Asn-297, Asn-305, and Asn-329 each carry an N-linked (GlcNAc...) asparagine glycan. Cannabigerolate contacts are provided by Tyr-417 and Glu-442. The N-linked (GlcNAc...) asparagine glycan is linked to Asn-467. 481-483 (YLN) is a binding site for FAD. Tyr-484 (proton acceptor) is an active-site residue. N-linked (GlcNAc...) asparagine glycosylation occurs at Asn-499.

The protein belongs to the oxygen-dependent FAD-linked oxidoreductase family. In terms of assembly, monomer. Requires FAD as cofactor. In terms of processing, glycosylated when produced in a heterologous system. The deglycosylated THCA synthase has more catalytic activity than the glycosylated form. Post-translationally, the FAD cofactor is bound via a bicovalent 6-S-cysteinyl, 8alpha-N1-histidyl FAD linkage. Expressed in the secretory cells of glandular trichomes.

The protein resides in the secreted. It is found in the extracellular space. The protein localises to the apoplast. The catalysed reaction is cannabigerolate + O2 = Delta(9)-tetrahydrocannabinolate + H2O2. The protein operates within secondary metabolite biosynthesis; terpenoid biosynthesis. With respect to regulation, inhibited by Hg(2+). Oxidoreductase involved in the biosynthesis of cannabinoids-related terpenophenolic natural products, which have pharmacological activity. Catalyzes the oxidative cyclization of the monoterpene moiety in cannabigerolic acid (CBGA), producing delta(9)-tetrahydrocannabinolate (THCA), the major cannabioid in drug-type Cannabis plants. Can also use cannabinerolic acid as substrate, but not cannabigerol or cannabinerol. In Cannabis sativa (Hemp), this protein is Tetrahydrocannabinolic acid synthase.